A 257-amino-acid polypeptide reads, in one-letter code: tRNA (guanine-N(1)-)-methyltransferase (257 aa).

Residues Gly-112 and 136–141 (LGDYVL) each bind S-adenosyl-L-methionine.

The protein belongs to the RNA methyltransferase TrmD family. Homodimer.

Its subcellular location is the cytoplasm. The catalysed reaction is guanosine(37) in tRNA + S-adenosyl-L-methionine = N(1)-methylguanosine(37) in tRNA + S-adenosyl-L-homocysteine + H(+). In terms of biological role, specifically methylates guanosine-37 in various tRNAs. This chain is tRNA (guanine-N(1)-)-methyltransferase, found in Salinispora tropica (strain ATCC BAA-916 / DSM 44818 / JCM 13857 / NBRC 105044 / CNB-440).